Consider the following 86-residue polypeptide: uncharacterized protein (86 aa).

This is an uncharacterized protein from Helicobacter pylori (strain J99 / ATCC 700824) (Campylobacter pylori J99).